A 365-amino-acid chain; its full sequence is Endophilin-B1 (365 aa).

The residue at position 1 (Met1) is an N-acetylmethionine. The tract at residues 1-30 (MNIMDFNVKKLAADAGTFLSRAVQFTEEKL) is membrane-binding amphipathic helix. The tract at residues 1–37 (MNIMDFNVKKLAADAGTFLSRAVQFTEEKLGQAEKTE) is required for membrane binding. Residues 27-261 (EEKLGQAEKT…LGSFPSNYLS (235 aa)) enclose the BAR domain. Residue Thr145 is modified to Phosphothreonine; by CDK5. Positions 155 to 186 (YKTIAKERKLLQNKRLDLDAAKTRLKKAKAAE) form a coiled coil. The SH3 domain maps to 305–365 (SNNRKARVLY…VPITYLELLN (61 aa)).

Belongs to the endophilin family. As to quaternary structure, homodimer, and heterodimer with SH3GLB2. Binds BAX; induction of apoptosis augments BAX binding. Binds DNM1, HTT, AMPH, BIN1 and ARFGAP1. Interacts with UVRAG; UVRAG bridges the interaction to BECN1 indicative for an association with the PI3K complex II (PI3KC3-C2). Isoform 3 interacts with PPP1CC; this interaction leads to the inhibition of phosphatase activity. Post-translationally, phosphorylated at Thr-145 by CDK5; this phosphorylation is required for autophagy induction in starved neurons and facilitates homodimerization. As to expression, isoform 1 is widely expressed. Isoform 2 is brain-specific. Isoform 3 is predominantly expressed in testis, but it is also detected in liver and, at much lower levels, in skin, stomach and ovary.

Its subcellular location is the cytoplasm. It is found in the golgi apparatus membrane. It localises to the mitochondrion outer membrane. The protein resides in the cytoplasmic vesicle. The protein localises to the autophagosome membrane. Its subcellular location is the midbody. In terms of biological role, may be required for normal outer mitochondrial membrane dynamics. Required for coatomer-mediated retrograde transport in certain cells. May recruit other proteins to membranes with high curvature. May promote membrane fusion. Involved in activation of caspase-dependent apoptosis by promoting BAX/BAK1 activation. Isoform 1 acts proapoptotic in fibroblasts. Involved in caspase-independent apoptosis during nutrition starvation and involved in the regulation of autophagy. Activates lipid kinase activity of PIK3C3 during autophagy probably by associating with the PI3K complex II (PI3KC3-C2). Associated with PI3KC3-C2 during autophagy may regulate the trafficking of ATG9A from the Golgi complex to the peripheral cytoplasm for the formation of autophagosomes by inducing Golgi membrane tubulation and fragmentation. Involved in regulation of degradative endocytic trafficking and cytokinesis, probably in the context of PI3KC3-C2. Isoform 2 acts antiapoptotic in neuronal cells; involved in maintenance of mitochondrial morphology and promotes neuronal viability. The protein is Endophilin-B1 (Sh3glb1) of Mus musculus (Mouse).